Reading from the N-terminus, the 116-residue chain is Ig heavy chain V region 1B43 (116 aa).

The first 18 residues, methionine 1–serine 18, serve as a signal peptide directing secretion. The tract at residues aspartate 19–threonine 48 is framework-1. An intrachain disulfide couples cysteine 40 to cysteine 114. The segment at serine 49–tryptophan 53 is complementarity-determining-1. Positions histidine 54–methionine 67 are framework-2. Residues glycine 68–serine 84 are complementarity-determining-2. The framework-3 stretch occupies residues arginine 85 to arginine 116.

The polypeptide is Ig heavy chain V region 1B43 (Mus musculus (Mouse)).